The sequence spans 206 residues: Large ribosomal subunit protein uL4 (206 aa).

Positions 46-77 (GTRAQKDREQVRHSTKKPFKQKGTGRARAGMT) are disordered. Over residues 58–70 (HSTKKPFKQKGTG) the composition is skewed to basic residues.

It belongs to the universal ribosomal protein uL4 family. As to quaternary structure, part of the 50S ribosomal subunit.

One of the primary rRNA binding proteins, this protein initially binds near the 5'-end of the 23S rRNA. It is important during the early stages of 50S assembly. It makes multiple contacts with different domains of the 23S rRNA in the assembled 50S subunit and ribosome. In terms of biological role, forms part of the polypeptide exit tunnel. This Polaromonas sp. (strain JS666 / ATCC BAA-500) protein is Large ribosomal subunit protein uL4.